Here is a 711-residue protein sequence, read N- to C-terminus: MKSLILAEKPSVARDIADALQINQKRNGYFENNQYIVTWALGHLVTNATPEQYDKNLKEWRLEDLPIIPKYMKTVVIGKTSKQFKTVKALILDNKVKDIIIATDAGREGELVARLILDKVGNKKPIRRLWISSVTKKAIQQGFKNLKDGRQYNDLYYAALARSEADWIVGINATRALTTKYDAQLSLGRVQTPTIQLVNTRQQEINQFKPQQYFTLSLTVKGFDFQLESNQRYTNKETLEQMVNNLKNVDGKIKSVATKHKKSYPQSLYNLTDLQQDMYRRYKIGPKETLNTLQSLYERHKVVTYPRTDSNYLTTDMVDTMKERIQVTMATTYKDQARPLMSKTFSSKMSIFNNQKVSDHHAIIPTEVRPVMSDLSNRELKLYDMIVERFLEALMPPHEYDAITVTLEVAGHTFVLKENVTTVLGFKSIRQGESITEMQQPFSEGDEVKISKTNIREHETTPPEYFNEGSLLKAMENPQNFIQLKDKKYAQTLKQTGGIGTVATRADIIDKLFNMNAIESRDGKIKVTSKGKQILELAPEELTSPLLTAQWEEKLLLIERGKYQAKTFINEMKDFTKDVVNGIKNSDRKYKHDNLTTTECPTCGKFMIKVKTKNGQMLVCQDPSCKTKKNVQRKTNARCPNCKKKLTLFGKGKEAVYRCVCGHSETQAHMDQRMKSKSSGKVSRKEMKKYMNKNEGLDNNPFKDALKNLNL.

The 134-residue stretch at 2–135 folds into the Toprim domain; that stretch reads KSLILAEKPS…IRRLWISSVT (134 aa). Residues glutamate 8 and aspartate 104 each coordinate Mg(2+). The Topo IA-type catalytic domain maps to 152 to 580; that stretch reads YNDLYYAALA…EMKDFTKDVV (429 aa). Residues 186-191 are interaction with DNA; it reads SLGRVQ. The O-(5'-phospho-DNA)-tyrosine intermediate role is filled by tyrosine 305. The segment at 691–711 is disordered; the sequence is MNKNEGLDNNPFKDALKNLNL.

The protein belongs to the type IA topoisomerase family. Mg(2+) serves as cofactor.

It catalyses the reaction ATP-independent breakage of single-stranded DNA, followed by passage and rejoining.. In terms of biological role, releases the supercoiling and torsional tension of DNA, which is introduced during the DNA replication and transcription, by transiently cleaving and rejoining one strand of the DNA duplex. Introduces a single-strand break via transesterification at a target site in duplex DNA. The scissile phosphodiester is attacked by the catalytic tyrosine of the enzyme, resulting in the formation of a DNA-(5'-phosphotyrosyl)-enzyme intermediate and the expulsion of a 3'-OH DNA strand. The free DNA strand then undergoes passage around the unbroken strand, thus removing DNA supercoils. Finally, in the religation step, the DNA 3'-OH attacks the covalent intermediate to expel the active-site tyrosine and restore the DNA phosphodiester backbone. In Staphylococcus aureus (strain NCTC 8325 / PS 47), this protein is DNA topoisomerase 3.